The chain runs to 592 residues: K(+) efflux antiporter 4 (592 aa).

The N-terminal stretch at 1 to 35 is a signal peptide; the sequence is MRRCKNNTDKFSVITMRLLTLLLICTFFFFFSFAY. Helical transmembrane passes span 169-189, 193-213, 221-241, 248-268, 279-299, 313-333, 343-363, 388-408, 437-457, 462-482, 491-511, and 535-555; these read LISD…AFAC, PVIT…LSFV, TVAQ…FSAA, AVAI…SGIT, GIFV…KFLM, VGTL…LPVL, VLSM…LFVL, LAAV…GLSL, NFFA…HFLW, ILLA…AIVV, TAVL…VLLS, and LVTT…GVLL.

The protein belongs to the monovalent cation:proton antiporter 2 (CPA2) transporter (TC 2.A.37) family. KEA (TC 2.A.37.1) subfamily. In terms of tissue distribution, expressed in roots, stems, leaves, flowers and silique.

Its subcellular location is the golgi apparatus membrane. The protein resides in the golgi apparatus. The protein localises to the trans-Golgi network membrane. It localises to the prevacuolar compartment membrane. It is found in the endomembrane system. It carries out the reaction K(+)(in) + H(+)(out) = K(+)(out) + H(+)(in). Electroneutral K(+)/H(+) efflux antiporter involved in K(+) homeostasis and osmotic adjustment. Together with KEA5 and KEA6, promotes growth and development, and facilitates endosomal pH and ions homeostasis, as well as salt tolerance (e.g. K(+), NaCl and LiCl), probably by supporting cell wall biosynthesis during rapid etiolated seedling growth. The sequence is that of K(+) efflux antiporter 4 from Arabidopsis thaliana (Mouse-ear cress).